The primary structure comprises 238 residues: End-binding protein 1 (238 aa).

One can recognise a Calponin-homology (CH) domain in the interval 15–117; sequence FVGRVSLLKW…FFQWFKWFFD (103 aa). The tract at residues 101–238 is interaction with aurora kinase; sequence KYMDNFEFFQ…EDILYAEYHQ (138 aa). Residues 124 to 165 are compositionally biased toward polar residues; sequence KSGATESGSANAVTKTSKPGNRSGSTAASMQNPKASSTSGPS. The segment at 124-169 is disordered; sequence KSGATESGSANAVTKTSKPGNRSGSTAASMQNPKASSTSGPSIDSK. At S148 the chain carries Phosphoserine. The EB1 C-terminal domain occupies 156-238; that stretch reads PKASSTSGPS…EDILYAEYHQ (83 aa).

It belongs to the MAPRE family. As to quaternary structure, homodimer; disulfide-linked and via interaction of the C-terminal EB1-specific domains. Interacts with BOP1 (via C-terminal WD repeats). Interacts with giardin subunit gamma, neurogenic locus notch homolog protein, GL50803_8358 and GL50803_11327. Interacts (via C-terminal residues 101-238) with aurora kinase. Interacts with tubulin gamma chain. In terms of processing, phosphorylated in vitro by aurora kinase. Phosphorylation is important for cell division.

It localises to the nucleus membrane. The protein localises to the cytoplasm. It is found in the cytoskeleton. Its subcellular location is the spindle. The protein resides in the nucleus envelope. It localises to the flagellum axoneme. The protein localises to the cell projection. It is found in the cilium. Its subcellular location is the flagellum. Involved in cell division. Involved in mitosis. Regulates dynamics of microtubules (MTs) during mitosis. Required for cytokinesis. Binds polymerized MTs in vitro. Is able to rescue a mitotic division defect, the proper positioning of the nucleus, of the S.cerevisiae BIM1 knockout mutant in a complementation assay. May play a role in spindle positioning and MT distribution. May be involved in MT nucleation for the formation of median bodies and in the biogenesis of flagella. Based on its localization to both the flagellar exit point and the distal flagellar tips, it may mediate the transition from anterograde to retrograde intraflagellar transport (IFT). The polypeptide is End-binding protein 1 (Giardia intestinalis (strain ATCC 50803 / WB clone C6) (Giardia lamblia)).